The chain runs to 612 residues: Probable Xaa-Pro aminopeptidase P (612 aa).

Residues Asp409, Asp420, Glu518, and Glu532 each contribute to the Mn(2+) site.

This sequence belongs to the peptidase M24B family. The cofactor is Mn(2+).

The catalysed reaction is Release of any N-terminal amino acid, including proline, that is linked to proline, even from a dipeptide or tripeptide.. Catalyzes the removal of a penultimate prolyl residue from the N-termini of peptides. In Verticillium alfalfae (strain VaMs.102 / ATCC MYA-4576 / FGSC 10136) (Verticillium wilt of alfalfa), this protein is Probable Xaa-Pro aminopeptidase P (AMPP).